Reading from the N-terminus, the 310-residue chain is tRNA uridine(34) hydroxylase (310 aa).

One can recognise a Rhodanese domain in the interval S124–S218. The active-site Cysteine persulfide intermediate is the C178.

Belongs to the TrhO family.

It carries out the reaction uridine(34) in tRNA + AH2 + O2 = 5-hydroxyuridine(34) in tRNA + A + H2O. Catalyzes oxygen-dependent 5-hydroxyuridine (ho5U) modification at position 34 in tRNAs. The polypeptide is tRNA uridine(34) hydroxylase (Pseudomonas putida (strain ATCC 47054 / DSM 6125 / CFBP 8728 / NCIMB 11950 / KT2440)).